Reading from the N-terminus, the 134-residue chain is Large ribosomal subunit protein uL16c (134 aa).

Residues 1–17 (MLSPKRTRFRKQHRGRM) show a composition bias toward basic residues. Residues 1–22 (MLSPKRTRFRKQHRGRMKGISS) form a disordered region.

It belongs to the universal ribosomal protein uL16 family. Part of the 50S ribosomal subunit.

It localises to the plastid. The protein resides in the chloroplast. The chain is Large ribosomal subunit protein uL16c from Solanum tuberosum (Potato).